The following is a 78-amino-acid chain: Large ribosomal subunit protein bL28 (78 aa).

It belongs to the bacterial ribosomal protein bL28 family.

This chain is Large ribosomal subunit protein bL28, found in Nostoc sp. (strain PCC 7120 / SAG 25.82 / UTEX 2576).